Here is an 88-residue protein sequence, read N- to C-terminus: Small ribosomal subunit protein bS20 (88 aa).

The segment at 1 to 26 (MANTAQARKRARQNTKRRQNSASQRS) is disordered. Residues 7–19 (ARKRARQNTKRRQ) are compositionally biased toward basic residues.

Belongs to the bacterial ribosomal protein bS20 family.

In terms of biological role, binds directly to 16S ribosomal RNA. This chain is Small ribosomal subunit protein bS20, found in Psychrobacter cryohalolentis (strain ATCC BAA-1226 / DSM 17306 / VKM B-2378 / K5).